Consider the following 102-residue polypeptide: Large ribosomal subunit protein bL21 (102 aa).

It belongs to the bacterial ribosomal protein bL21 family. Part of the 50S ribosomal subunit. Contacts protein L20.

This protein binds to 23S rRNA in the presence of protein L20. The polypeptide is Large ribosomal subunit protein bL21 (Leifsonia xyli subsp. xyli (strain CTCB07)).